The chain runs to 63 residues: Beta-defensin 4 (63 aa).

The N-terminal stretch at methionine 1–threonine 22 is a signal peptide. At glutamine 23 the chain carries Pyrrolidone carboxylic acid. 3 disulfide bridges follow: cysteine 31-cysteine 59, cysteine 38-cysteine 52, and cysteine 42-cysteine 60.

The protein belongs to the beta-defensin family. Highly expressed in lung.

It is found in the secreted. In terms of biological role, exhibits antimicrobial activity against Gram-negative bacteria and Gram-positive bacteria. May act as a ligand for C-C chemokine receptor CCR6. Binds to CCR6 and induces chemotactic activity of CCR6-expressing cells. The sequence is that of Beta-defensin 4 (Defb4) from Rattus norvegicus (Rat).